The sequence spans 303 residues: Probable serine/threonine-protein kinase FPV212 (303 aa).

Residues 25–303 form the Protein kinase domain; that stretch reads WILGKQLGSG…NYESLKQMFL (279 aa). ATP is bound by residues 31-39 and Lys54; that span reads LGSGGFGLV. Asp160 functions as the Proton acceptor in the catalytic mechanism.

The protein belongs to the protein kinase superfamily. Ser/Thr protein kinase family. Poxviruses subfamily.

It carries out the reaction L-seryl-[protein] + ATP = O-phospho-L-seryl-[protein] + ADP + H(+). The enzyme catalyses L-threonyl-[protein] + ATP = O-phospho-L-threonyl-[protein] + ADP + H(+). The protein is Probable serine/threonine-protein kinase FPV212 of Vertebrata (FPV).